We begin with the raw amino-acid sequence, 467 residues long: Asparagine--tRNA ligase (467 aa).

Belongs to the class-II aminoacyl-tRNA synthetase family. Homodimer.

It is found in the cytoplasm. The catalysed reaction is tRNA(Asn) + L-asparagine + ATP = L-asparaginyl-tRNA(Asn) + AMP + diphosphate + H(+). The sequence is that of Asparagine--tRNA ligase from Legionella pneumophila (strain Lens).